The following is a 30-amino-acid chain: Natriuretic peptides A (30 aa).

The propeptide occupies 1–3 (APR). C11 and C27 are joined by a disulfide.

Belongs to the natriuretic peptide family. In terms of processing, cleaved upon secretion to produce the functional hormone.

The protein localises to the secreted. Hormone playing a key role in cardiovascular homeostasis through regulation of natriuresis, diuresis, and vasodilation. Has a cGMP-stimulating activity. The sequence is that of Natriuretic peptides A from Pelophylax ridibundus (Marsh frog).